We begin with the raw amino-acid sequence, 173 residues long: Probable lipoprotein EnvE (173 aa).

A signal peptide spans 1–20 (MTLLSGKTTLVLCLSSILCG). A lipid anchor (N-palmitoyl cysteine) is attached at cysteine 21. A lipid anchor (S-diacylglycerol cysteine) is attached at cysteine 21.

It is found in the cell membrane. This Salmonella typhimurium (strain LT2 / SGSC1412 / ATCC 700720) protein is Probable lipoprotein EnvE (envE).